A 675-amino-acid polypeptide reads, in one-letter code: Methionine--tRNA ligase (675 aa).

Positions 15-25 (PYANGPIHLGH) match the 'HIGH' region motif. Residues Cys146, Cys149, Cys159, and Cys162 each coordinate Zn(2+). Positions 332 to 336 (KMSKS) match the 'KMSKS' region motif. Residue Lys335 participates in ATP binding. A tRNA-binding domain is found at 574–675 (DFAKIDLRVA…AGAKPGMRVK (102 aa)).

This sequence belongs to the class-I aminoacyl-tRNA synthetase family. MetG type 1 subfamily. Homodimer. It depends on Zn(2+) as a cofactor.

The protein resides in the cytoplasm. The catalysed reaction is tRNA(Met) + L-methionine + ATP = L-methionyl-tRNA(Met) + AMP + diphosphate. Its function is as follows. Is required not only for elongation of protein synthesis but also for the initiation of all mRNA translation through initiator tRNA(fMet) aminoacylation. The chain is Methionine--tRNA ligase from Shewanella amazonensis (strain ATCC BAA-1098 / SB2B).